Reading from the N-terminus, the 244-residue chain is 7-cyano-7-deazaguanine synthase (244 aa).

Residue 14 to 24 (FSGGQDSATCV) coordinates ATP. Residues C202, C217, C220, and C223 each coordinate Zn(2+).

Belongs to the QueC family. It depends on Zn(2+) as a cofactor.

It catalyses the reaction 7-carboxy-7-deazaguanine + NH4(+) + ATP = 7-cyano-7-deazaguanine + ADP + phosphate + H2O + H(+). The protein operates within purine metabolism; 7-cyano-7-deazaguanine biosynthesis. Catalyzes the ATP-dependent conversion of 7-carboxy-7-deazaguanine (CDG) to 7-cyano-7-deazaguanine (preQ(0)). In Burkholderia ambifaria (strain MC40-6), this protein is 7-cyano-7-deazaguanine synthase.